An 828-amino-acid chain; its full sequence is Periplasmic nitrate reductase (828 aa).

The segment at residues 1 to 33 (MKLSRRDFMKANAAVAAAAAAGLTIPTVVQAAA) is a signal peptide (tat-type signal). The 57-residue stretch at 39–95 (IKWDKAPCRFCGTGCGVLVGTQNGRIVASQGDPEAAVNRGLSCIKGYFLPKIMYGKD) folds into the 4Fe-4S Mo/W bis-MGD-type domain. Residues cysteine 46, cysteine 49, cysteine 53, and cysteine 81 each coordinate [4Fe-4S] cluster. Mo-bis(molybdopterin guanine dinucleotide) is bound by residues lysine 83, glutamine 150, asparagine 175, cysteine 179, 212-219 (WGSNMAEM), 243-247 (STFEH), 262-264 (QTD), methionine 372, glutamine 376, asparagine 482, 508-509 (SD), lysine 531, aspartate 558, and 718-727 (TGRVLEHWHT). Phenylalanine 794 provides a ligand contact to substrate. Residues asparagine 802 and lysine 819 each contribute to the Mo-bis(molybdopterin guanine dinucleotide) site.

This sequence belongs to the prokaryotic molybdopterin-containing oxidoreductase family. NasA/NapA/NarB subfamily. Component of the periplasmic nitrate reductase NapAB complex composed of NapA and NapB. It depends on [4Fe-4S] cluster as a cofactor. Mo-bis(molybdopterin guanine dinucleotide) serves as cofactor. Predicted to be exported by the Tat system. The position of the signal peptide cleavage has not been experimentally proven.

The protein localises to the periplasm. The catalysed reaction is 2 Fe(II)-[cytochrome] + nitrate + 2 H(+) = 2 Fe(III)-[cytochrome] + nitrite + H2O. In terms of biological role, catalytic subunit of the periplasmic nitrate reductase complex NapAB. Receives electrons from NapB and catalyzes the reduction of nitrate to nitrite. This Serratia proteamaculans (strain 568) protein is Periplasmic nitrate reductase.